Reading from the N-terminus, the 230-residue chain is Phosphatidate cytidylyltransferase (230 aa).

The next 6 helical transmembrane spans lie at 33–53 (FVIA…LVGT), 67–87 (IPDL…LIFL), 95–115 (WLIM…MIGG), 133–153 (WSGL…VSFI), 167–187 (IYLF…DLFI), and 206–226 (HGGV…LFLM).

This sequence belongs to the CDS family.

Its subcellular location is the cell membrane. The catalysed reaction is a 1,2-diacyl-sn-glycero-3-phosphate + CTP + H(+) = a CDP-1,2-diacyl-sn-glycerol + diphosphate. It participates in phospholipid metabolism; CDP-diacylglycerol biosynthesis; CDP-diacylglycerol from sn-glycerol 3-phosphate: step 3/3. In Rickettsia conorii (strain ATCC VR-613 / Malish 7), this protein is Phosphatidate cytidylyltransferase (cdsA).